We begin with the raw amino-acid sequence, 88 residues long: Small ribosomal subunit protein uS17 (88 aa).

This sequence belongs to the universal ribosomal protein uS17 family. Part of the 30S ribosomal subunit.

Functionally, one of the primary rRNA binding proteins, it binds specifically to the 5'-end of 16S ribosomal RNA. The polypeptide is Small ribosomal subunit protein uS17 (Maridesulfovibrio salexigens (strain ATCC 14822 / DSM 2638 / NCIMB 8403 / VKM B-1763) (Desulfovibrio salexigens)).